Consider the following 430-residue polypeptide: Enolase (430 aa).

Q167 serves as a coordination point for (2R)-2-phosphoglycerate. E209 functions as the Proton donor in the catalytic mechanism. Mg(2+)-binding residues include D246, E289, and D316. (2R)-2-phosphoglycerate contacts are provided by K341, R370, S371, and K392. K341 acts as the Proton acceptor in catalysis.

This sequence belongs to the enolase family. In terms of assembly, component of the RNA degradosome, a multiprotein complex involved in RNA processing and mRNA degradation. Mg(2+) serves as cofactor.

Its subcellular location is the cytoplasm. It localises to the secreted. The protein localises to the cell surface. It carries out the reaction (2R)-2-phosphoglycerate = phosphoenolpyruvate + H2O. Its pathway is carbohydrate degradation; glycolysis; pyruvate from D-glyceraldehyde 3-phosphate: step 4/5. Functionally, catalyzes the reversible conversion of 2-phosphoglycerate (2-PG) into phosphoenolpyruvate (PEP). It is essential for the degradation of carbohydrates via glycolysis. This is Enolase from Alcanivorax borkumensis (strain ATCC 700651 / DSM 11573 / NCIMB 13689 / SK2).